The primary structure comprises 77 residues: uncharacterized protein (77 aa).

This is an uncharacterized protein from Saccharomyces cerevisiae (strain ATCC 204508 / S288c) (Baker's yeast).